The chain runs to 91 residues: Small ribosomal subunit protein bS20 (91 aa).

Basic and acidic residues predominate over residues 1-21; it reads MPLHKSAEKRLRQSARRNERN. Disordered stretches follow at residues 1–25 and 71–91; these read MPLH…RARK and NKAS…AQKD.

The protein belongs to the bacterial ribosomal protein bS20 family.

Binds directly to 16S ribosomal RNA. This chain is Small ribosomal subunit protein bS20, found in Prosthecochloris aestuarii (strain DSM 271 / SK 413).